We begin with the raw amino-acid sequence, 225 residues long: Thymidylate kinase (225 aa).

10–17 (GPEGAGKT) is a binding site for ATP.

This sequence belongs to the thymidylate kinase family.

The enzyme catalyses dTMP + ATP = dTDP + ADP. Functionally, phosphorylation of dTMP to form dTDP in both de novo and salvage pathways of dTTP synthesis. The polypeptide is Thymidylate kinase (Geobacillus thermodenitrificans (strain NG80-2)).